The following is a 369-amino-acid chain: 2-aminoethylphosphonate--pyruvate transaminase (369 aa).

Position 193 is an N6-(pyridoxal phosphate)lysine (K193).

Belongs to the class-V pyridoxal-phosphate-dependent aminotransferase family. PhnW subfamily. In terms of assembly, homodimer. Pyridoxal 5'-phosphate is required as a cofactor.

The enzyme catalyses (2-aminoethyl)phosphonate + pyruvate = phosphonoacetaldehyde + L-alanine. Involved in phosphonate degradation. The polypeptide is 2-aminoethylphosphonate--pyruvate transaminase (Pseudomonas fluorescens (strain ATCC BAA-477 / NRRL B-23932 / Pf-5)).